The primary structure comprises 87 residues: Small ribosomal subunit protein uS17 (87 aa).

This sequence belongs to the universal ribosomal protein uS17 family. Part of the 30S ribosomal subunit.

Its function is as follows. One of the primary rRNA binding proteins, it binds specifically to the 5'-end of 16S ribosomal RNA. This chain is Small ribosomal subunit protein uS17, found in Listeria innocua serovar 6a (strain ATCC BAA-680 / CLIP 11262).